Here is a 270-residue protein sequence, read N- to C-terminus: UPF0354 protein BCE_4835 (270 aa).

This sequence belongs to the UPF0354 family.

This chain is UPF0354 protein BCE_4835, found in Bacillus cereus (strain ATCC 10987 / NRS 248).